The primary structure comprises 242 residues: MTERFQQKNISVPDGIWIMRQTWNDVLFAHWPVDVSILRALVPSVLELDTYNGQAWISMLPFMLTNLRARYLPVIPGARAFPELNLRTYVTYKGKPGIYFFSLDADHRLAVLGARTFFHLPYFYADMKSEKNGDAIDYVSKRKNDKEAAFHAAYRPISAPFTAEKDSLDYWLTERYRLYTTYRNKLYYEDIHHHPWLLQNAEAEISVNTVTDAHGITLPESDPLLHYAKKQDVLFWPLRKWS.

This is an uncharacterized protein from Bacillus subtilis (strain 168).